The chain runs to 488 residues: Diacylglycerol kinase 3 (488 aa).

The interval 1 to 24 (MDSPVSKTDASKEKFVASRPSTAD) is disordered. In terms of domain architecture, DAGKc spans 87–245 (APHAPMVVFI…SWKILVSMPS (159 aa)).

It belongs to the eukaryotic diacylglycerol kinase family. As to quaternary structure, monomer.

The enzyme catalyses a 1,2-diacyl-sn-glycerol + ATP = a 1,2-diacyl-sn-glycero-3-phosphate + ADP + H(+). Functionally, phosphorylates the second messenger diacylglycerol (DAG) to generate phosphatidic acid (PA), another important signaling molecule. PA is required for plant development and responses to abiotic stress and pathogen attack. May be involved in the accumulation of PA during cold stress. The polypeptide is Diacylglycerol kinase 3 (DGK3) (Arabidopsis thaliana (Mouse-ear cress)).